We begin with the raw amino-acid sequence, 713 residues long: Denticleless protein homolog (713 aa).

WD repeat units follow at residues 47–89 (GAAV…VQRL), 96–135 (AHTNAVFDIAWVPGEHKLVTASGDQTAKLWDVKAGDLIGE), and 138–178 (GHQC…KDGF). A DDB1-binding motif motif is present at residues 168–171 (WDTR). The Nuclear localization signal signature appears at 197–204 (PSKVKKRK). WD repeat units lie at residues 215-254 (DSQQSVTVVIFQDEHTIISAGAVDGIVKVWDLRKNYSAYR), 270-309 (TRKLGYSNLVLDPTGTNLFASCTDDNVYMFNATGLKTEPV), 314-355 (GHQN…VPPV), and 359-399 (GHCQ…EDSA). Residues 244 to 247 (WDLR) carry the DDB1-binding motif motif. Disordered regions lie at residues 474-544 (TPQR…EKRA), 604-623 (GFDQEFSPGPSTSFLINGTV), and 635-700 (SDLR…TPGS). Polar residues-rich tracts occupy residues 504–516 (TPKSSTRADTKTP) and 612–623 (GPSTSFLINGTV). The segment covering 635–644 (SDLRDKENSS) has biased composition (basic and acidic residues). A compositionally biased stretch (polar residues) spans 686 to 699 (NAPNSPVSVPTTPG).

Belongs to the WD repeat cdt2 family. In terms of assembly, component of the DCX(DTL) E3 ubiquitin ligase complex, at least composed of cul4 (cul4a or cul4b), ddb1, dtl/cdt2 and rbx1.

It localises to the nucleus. The protein localises to the cytoplasm. It is found in the cytoskeleton. The protein resides in the microtubule organizing center. Its subcellular location is the centrosome. It localises to the chromosome. Its pathway is protein modification; protein ubiquitination. Its function is as follows. Substrate-specific adapter of a DCX (DDB1-CUL4-X-box) E3 ubiquitin-protein ligase complex required for cell cycle control, DNA damage response and translesion DNA synthesis. The DCX(DTL) complex, also named CRL4(CDT2) complex, mediates the polyubiquitination and subsequent degradation of CDT1, CDKN1A/p21(CIP1), KMT5A and SDE2. CDT1 degradation in response to DNA damage is necessary to ensure proper cell cycle regulation of DNA replication. CDKN1A/p21(CIP1) degradation during S phase or following UV irradiation is essential to control replication licensing. KMT5A degradation is also important for a proper regulation of mechanisms such as TGF-beta signaling, cell cycle progression, DNA repair and cell migration. Most substrates require their interaction with PCNA for their polyubiquitination: substrates interact with PCNA via their PIP-box, and those containing the 'K+4' motif in the PIP box, recruit the DCX(DTL) complex, leading to their degradation. In undamaged proliferating cells, the DCX(DTL) complex also promotes the 'Lys-164' monoubiquitination of PCNA, thereby being involved in PCNA-dependent translesion DNA synthesis. May play a role in the regulation of the circadian clock. The chain is Denticleless protein homolog (dtl) from Xenopus tropicalis (Western clawed frog).